The sequence spans 99 residues: Large ribosomal subunit protein bL27 (99 aa).

Positions 13-65 (AHHKGGGSTTNGRNSAGRRLGAKRADGQEVHAGSIIYRQRGTKIHPGKNVGRG) are disordered.

This sequence belongs to the bacterial ribosomal protein bL27 family.

The chain is Large ribosomal subunit protein bL27 from Lactobacillus delbrueckii subsp. bulgaricus (strain ATCC BAA-365 / Lb-18).